Reading from the N-terminus, the 85-residue chain is Large ribosomal subunit protein bL27 (85 aa).

The protein belongs to the bacterial ribosomal protein bL27 family.

The sequence is that of Large ribosomal subunit protein bL27 from Ruthia magnifica subsp. Calyptogena magnifica.